The following is a 630-amino-acid chain: tRNA uridine 5-carboxymethylaminomethyl modification enzyme MnmG (630 aa).

13 to 18 (GGGHAG) serves as a coordination point for FAD. 273–287 (GPRYCPSIEDKVNRF) lines the NAD(+) pocket.

It belongs to the MnmG family. As to quaternary structure, homodimer. Heterotetramer of two MnmE and two MnmG subunits. It depends on FAD as a cofactor.

It localises to the cytoplasm. NAD-binding protein involved in the addition of a carboxymethylaminomethyl (cmnm) group at the wobble position (U34) of certain tRNAs, forming tRNA-cmnm(5)s(2)U34. The polypeptide is tRNA uridine 5-carboxymethylaminomethyl modification enzyme MnmG (Saccharophagus degradans (strain 2-40 / ATCC 43961 / DSM 17024)).